A 363-amino-acid polypeptide reads, in one-letter code: Mitogen-activated protein kinase kinase 2 (363 aa).

Ser56 bears the Phosphoserine mark. Positions Leu70 to Leu330 constitute a Protein kinase domain. Residues Ile76–Val84 and Lys99 each bind ATP. Catalysis depends on Asp192, which acts as the Proton acceptor. A phosphothreonine mark is found at Thr220, Thr226, and Thr230.

Belongs to the protein kinase superfamily. STE Ser/Thr protein kinase family. MAP kinase kinase subfamily. Interacts with MEKK1, MPK4 and MPK6. May form a ternary complex composed of MEKK1 and MKK1/MKK2 and MPK4. Interacts with MPK10 and MPK11. Interacts with MAPKKK5 mainly in the cytosol. In terms of processing, phosphorylation at Thr-220 and Thr-226 by MAP kinase kinase kinases positively regulates kinase activity. Phosphorylated by MEKK1 in response to cold. Phosphorylated by MAPKKK5.

It carries out the reaction L-seryl-[protein] + ATP = O-phospho-L-seryl-[protein] + ADP + H(+). The catalysed reaction is L-threonyl-[protein] + ATP = O-phospho-L-threonyl-[protein] + ADP + H(+). The enzyme catalyses L-tyrosyl-[protein] + ATP = O-phospho-L-tyrosyl-[protein] + ADP + H(+). With respect to regulation, activated in response to cold and salt stresses through serine and threonine phosphorylation by MEKK1. Functionally, MEKK1, MKK1/MKK2 and MPK4 function in a signaling pathway that modulates the expression of genes responding to biotic and abiotic stresses and also plays an important role in pathogen defense by negatively regulating innate immunity. Plays a role in abiotic stress tolerance and plant disease resistance through activation of MPK4 and MPK6 by phosphorylation. Acts redundantly with MKK1. The protein is Mitogen-activated protein kinase kinase 2 (MKK2) of Arabidopsis thaliana (Mouse-ear cress).